A 220-amino-acid polypeptide reads, in one-letter code: Large ribosomal subunit protein uL1 (220 aa).

Belongs to the universal ribosomal protein uL1 family. As to quaternary structure, part of the 50S ribosomal subunit.

Its function is as follows. Binds directly to 23S rRNA. The L1 stalk is quite mobile in the ribosome, and is involved in E site tRNA release. Functionally, protein L1 is also a translational repressor protein, it controls the translation of the L11 operon by binding to its mRNA. The sequence is that of Large ribosomal subunit protein uL1 from Ehrlichia chaffeensis (strain ATCC CRL-10679 / Arkansas).